Consider the following 260-residue polypeptide: Snake venom serine protease KN5 (260 aa).

The N-terminal stretch at 1–18 (MVLIRVLANLLILQLSYA) is a signal peptide. The propeptide occupies 19–24 (QKSSEL). One can recognise a Peptidase S1 domain in the interval 25-251 (VIGGDECNIN…HLDWIQSIIA (227 aa)). Cystine bridges form between Cys-31/Cys-165, Cys-100/Cys-258, Cys-144/Cys-212, Cys-176/Cys-191, and Cys-202/Cys-227. Catalysis depends on His-67, which acts as the Charge relay system. Asn-105 carries N-linked (GlcNAc...) asparagine glycosylation. The active-site Charge relay system is Asp-112. N-linked (GlcNAc...) asparagine glycans are attached at residues Asn-124 and Asn-172. Residue Ser-206 is the Charge relay system of the active site. N-linked (GlcNAc...) asparagine glycans are attached at residues Asn-213 and Asn-255.

Belongs to the peptidase S1 family. Snake venom subfamily. In terms of assembly, monomer. In terms of tissue distribution, expressed by the venom gland.

It localises to the secreted. Its function is as follows. Snake venom serine protease that may act in the hemostasis system of the prey. This chain is Snake venom serine protease KN5, found in Trimeresurus stejnegeri (Chinese green tree viper).